Reading from the N-terminus, the 92-residue chain is Small ribosomal subunit protein uS19 (92 aa).

Belongs to the universal ribosomal protein uS19 family.

Functionally, protein S19 forms a complex with S13 that binds strongly to the 16S ribosomal RNA. This is Small ribosomal subunit protein uS19 from Nitrobacter winogradskyi (strain ATCC 25391 / DSM 10237 / CIP 104748 / NCIMB 11846 / Nb-255).